A 130-amino-acid polypeptide reads, in one-letter code: Small ribosomal subunit protein uS8 (130 aa).

It belongs to the universal ribosomal protein uS8 family. In terms of assembly, part of the 30S ribosomal subunit. Contacts proteins S5 and S12.

Functionally, one of the primary rRNA binding proteins, it binds directly to 16S rRNA central domain where it helps coordinate assembly of the platform of the 30S subunit. The protein is Small ribosomal subunit protein uS8 of Buchnera aphidicola subsp. Acyrthosiphon pisum (strain 5A).